Here is an 88-residue protein sequence, read N- to C-terminus: PTS system cellobiose-specific EIIB component (88 aa).

The 86-residue stretch at 3-88 folds into the PTS EIIB type-3 domain; sequence KKRIYLFCSA…IDTLLYGKVD (86 aa). C10 acts as the Phosphocysteine intermediate in catalysis. Residue C10 is modified to Phosphocysteine; by EIIA.

The protein resides in the cytoplasm. It carries out the reaction D-cellobiose(out) + N(pros)-phospho-L-histidyl-[protein] = 6-phospho-beta-D-glucosyl-(1-&gt;4)-D-glucose(in) + L-histidyl-[protein]. Its function is as follows. The phosphoenolpyruvate-dependent sugar phosphotransferase system (sugar PTS), a major carbohydrate active transport system, catalyzes the phosphorylation of incoming sugar substrates concomitantly with their translocation across the cell membrane. The enzyme II CelABD PTS system is involved in cellobiose transport. The protein is PTS system cellobiose-specific EIIB component of Aeromonas hydrophila.